Consider the following 265-residue polypeptide: Formyltransferase/hydrolase complex Fhc subunit C (265 aa).

This sequence belongs to the FwdC/FmdC family. As to quaternary structure, octaheteromer. Part of the formyltransferase/hydrolase complex fhc; composed of FhcA, FhcB, FhcC and FhcD.

It localises to the cytoplasm. It functions in the pathway one-carbon metabolism; formaldehyde degradation; formate from formaldehyde (H(4)MPT route): step 4/5. Its function is as follows. Involved in the transformation of 5-formyl tetrahydromethanopterin (5-formyl-H(4)MPT) to methanofuran (MFR) and formate via the formylmethanofuran (formyl-MFR). This Methylorubrum extorquens (strain ATCC 14718 / DSM 1338 / JCM 2805 / NCIMB 9133 / AM1) (Methylobacterium extorquens) protein is Formyltransferase/hydrolase complex Fhc subunit C (fhcC).